The following is a 917-amino-acid chain: Auxin response factor 17 (917 aa).

Residues 134–236 (FCKTLTASDT…QLLLGIRRAN (103 aa)) constitute a DNA-binding region (TF-B3). The disordered stretch occupies residues 571-649 (SVPNALSPFS…RPTAVPVPDP (79 aa)). Low complexity-rich tracts occupy residues 576–594 (LSPF…MTLQ) and 604–620 (SYPD…NTST). One can recognise a PB1 domain in the interval 786–870 (ATFVKVYKSG…SCIKILSPQE (85 aa)).

The protein belongs to the ARF family. Homodimers and heterodimers.

Its subcellular location is the nucleus. Auxin response factors (ARFs) are transcriptional factors that bind specifically to the DNA sequence 5'-TGTCTC-3' found in the auxin-responsive promoter elements (AuxREs). This chain is Auxin response factor 17 (ARF17), found in Oryza sativa subsp. indica (Rice).